A 269-amino-acid polypeptide reads, in one-letter code: 5'-nucleotidase SurE (269 aa).

A divalent metal cation-binding residues include aspartate 11, aspartate 12, serine 43, and asparagine 101.

It belongs to the SurE nucleotidase family. Requires a divalent metal cation as cofactor.

The protein localises to the cytoplasm. The catalysed reaction is a ribonucleoside 5'-phosphate + H2O = a ribonucleoside + phosphate. Functionally, nucleotidase that shows phosphatase activity on nucleoside 5'-monophosphates. The polypeptide is 5'-nucleotidase SurE (Prochlorococcus marinus subsp. pastoris (strain CCMP1986 / NIES-2087 / MED4)).